Here is a 28-residue protein sequence, read N- to C-terminus: Ranatuerin-2BYb (28 aa).

A disulfide bond links cysteine 23 and cysteine 28.

In terms of tissue distribution, expressed by the skin glands.

It localises to the secreted. Antibacterial activity against Gram-negative bacterium E.coli. Very weak hemolysis activity. The polypeptide is Ranatuerin-2BYb (Rana boylii (Foothill yellow-legged frog)).